The sequence spans 711 residues: Polyribonucleotide nucleotidyltransferase (711 aa).

2 residues coordinate Mg(2+): aspartate 486 and aspartate 492. The KH domain maps to 553-612; the sequence is PRIHTIKISTDKIKDVIGKGGSVIRALTEETGTTIEIEDDGTVKIAATDGEKAKYAIRRI. The 69-residue stretch at 622 to 690 folds into the S1 motif domain; that stretch reads GRIYNSKVTR…RQGRVRLSIK (69 aa). Residues 689-711 form a disordered region; it reads IKEATEQSQPAAAPEAPASEQAE. A compositionally biased stretch (low complexity) spans 694–711; it reads EQSQPAAAPEAPASEQAE.

This sequence belongs to the polyribonucleotide nucleotidyltransferase family. In terms of assembly, component of the RNA degradosome, which is a multiprotein complex involved in RNA processing and mRNA degradation. It depends on Mg(2+) as a cofactor.

The protein resides in the cytoplasm. The enzyme catalyses RNA(n+1) + phosphate = RNA(n) + a ribonucleoside 5'-diphosphate. Involved in mRNA degradation. Catalyzes the phosphorolysis of single-stranded polyribonucleotides processively in the 3'- to 5'-direction. This is Polyribonucleotide nucleotidyltransferase from Salmonella typhi.